A 215-amino-acid polypeptide reads, in one-letter code: RNA pyrophosphohydrolase (215 aa).

Positions 6 to 149 (GFRPNVGIIL…KRDVYQLALT (144 aa)) constitute a Nudix hydrolase domain. The short motif at 38-59 (GGIKYGETPMQAMYRELHEETG) is the Nudix box element.

It belongs to the Nudix hydrolase family. RppH subfamily. The cofactor is a divalent metal cation.

Functionally, accelerates the degradation of transcripts by removing pyrophosphate from the 5'-end of triphosphorylated RNA, leading to a more labile monophosphorylated state that can stimulate subsequent ribonuclease cleavage. This is RNA pyrophosphohydrolase from Burkholderia vietnamiensis (strain G4 / LMG 22486) (Burkholderia cepacia (strain R1808)).